We begin with the raw amino-acid sequence, 167 residues long: Glutathione peroxidase-like peroxiredoxin 1 (167 aa).

C36 acts as the Cysteine sulfenic acid (-SOH) intermediate in catalysis. C36 and C82 are disulfide-bonded.

Belongs to the glutathione peroxidase family. As to quaternary structure, monomer.

The protein resides in the peroxisome matrix. Its subcellular location is the mitochondrion outer membrane. It catalyses the reaction 2 glutathione + H2O2 = glutathione disulfide + 2 H2O. The enzyme catalyses a hydroperoxide + [thioredoxin]-dithiol = an alcohol + [thioredoxin]-disulfide + H2O. Its function is as follows. Glutathione peroxidase-like protein that protects cells from phospholipid hydroperoxides and nonphospholipid peroxides during oxidative stress. Has peroxidase activity using thioredoxin or glutathione as a reducing power. Involved in peroxisome formation. The protein is Glutathione peroxidase-like peroxiredoxin 1 of Saccharomyces cerevisiae (strain ATCC 204508 / S288c) (Baker's yeast).